Here is a 144-residue protein sequence, read N- to C-terminus: Peptide methionine sulfoxide reductase MsrB (144 aa).

Residues 5–127 enclose the MsrB domain; that stretch reads KEEKIKSLNR…NSAALRFIPK (123 aa). The active-site Nucleophile is the C116.

It belongs to the MsrB Met sulfoxide reductase family.

The catalysed reaction is L-methionyl-[protein] + [thioredoxin]-disulfide + H2O = L-methionyl-(R)-S-oxide-[protein] + [thioredoxin]-dithiol. This Bacillus velezensis (strain DSM 23117 / BGSC 10A6 / LMG 26770 / FZB42) (Bacillus amyloliquefaciens subsp. plantarum) protein is Peptide methionine sulfoxide reductase MsrB.